A 347-amino-acid polypeptide reads, in one-letter code: GMP reductase (347 aa).

108–131 (ADFEKTKQILDLNPALNFVCIDVA) is a binding site for NADP(+). K(+)-binding residues include Gly-181 and Gly-183. Catalysis depends on Cys-186, which acts as the Thioimidate intermediate. Residue 216-239 (IVSDGGCTTPGDVAKAFGGGADFV) participates in NADP(+) binding.

The protein belongs to the IMPDH/GMPR family. GuaC type 1 subfamily. In terms of assembly, homotetramer.

It carries out the reaction IMP + NH4(+) + NADP(+) = GMP + NADPH + 2 H(+). In terms of biological role, catalyzes the irreversible NADPH-dependent deamination of GMP to IMP. It functions in the conversion of nucleobase, nucleoside and nucleotide derivatives of G to A nucleotides, and in maintaining the intracellular balance of A and G nucleotides. This Shigella flexneri protein is GMP reductase.